A 205-amino-acid chain; its full sequence is Outer-membrane lipoprotein carrier protein (205 aa).

The first 21 residues, 1–21 (MRFLAVATMVVALMVPWSVRA), serve as a signal peptide directing secretion.

This sequence belongs to the LolA family. In terms of assembly, monomer.

The protein resides in the periplasm. Participates in the translocation of lipoproteins from the inner membrane to the outer membrane. Only forms a complex with a lipoprotein if the residue after the N-terminal Cys is not an aspartate (The Asp acts as a targeting signal to indicate that the lipoprotein should stay in the inner membrane). This Methylobacillus flagellatus (strain ATCC 51484 / DSM 6875 / VKM B-1610 / KT) protein is Outer-membrane lipoprotein carrier protein.